We begin with the raw amino-acid sequence, 363 residues long: Heat-inducible transcription repressor HrcA (363 aa).

The protein belongs to the HrcA family.

Its function is as follows. Negative regulator of class I heat shock genes (grpE-dnaK-dnaJ and groELS operons). Prevents heat-shock induction of these operons. This chain is Heat-inducible transcription repressor HrcA, found in Afipia carboxidovorans (strain ATCC 49405 / DSM 1227 / KCTC 32145 / OM5) (Oligotropha carboxidovorans).